The following is a 118-amino-acid chain: Superoxide-generating NADPH oxidase light chain subunit (118 aa).

A run of 4 helical transmembrane segments spans residues 9–29 (WAAM…IMGI), 36–56 (IAIY…PLSF), 62–82 (AIFH…VLCY), and 83–103 (FLVP…VFLI).

It belongs to the p22phox family. Composed of a heavy chain and a light chain.

It localises to the cell membrane. Critical component of the membrane-bound oxidase of phagocytes that generates superoxide. This Dictyostelium discoideum (Social amoeba) protein is Superoxide-generating NADPH oxidase light chain subunit (cybA).